We begin with the raw amino-acid sequence, 174 residues long: Protein GrpE (174 aa).

The protein belongs to the GrpE family. Homodimer.

It localises to the cytoplasm. In terms of biological role, participates actively in the response to hyperosmotic and heat shock by preventing the aggregation of stress-denatured proteins, in association with DnaK and GrpE. It is the nucleotide exchange factor for DnaK and may function as a thermosensor. Unfolded proteins bind initially to DnaJ; upon interaction with the DnaJ-bound protein, DnaK hydrolyzes its bound ATP, resulting in the formation of a stable complex. GrpE releases ADP from DnaK; ATP binding to DnaK triggers the release of the substrate protein, thus completing the reaction cycle. Several rounds of ATP-dependent interactions between DnaJ, DnaK and GrpE are required for fully efficient folding. This Methanothermobacter thermautotrophicus (strain ATCC 29096 / DSM 1053 / JCM 10044 / NBRC 100330 / Delta H) (Methanobacterium thermoautotrophicum) protein is Protein GrpE.